The primary structure comprises 376 residues: Histidinol-phosphate aminotransferase (376 aa).

Lysine 230 is modified (N6-(pyridoxal phosphate)lysine).

It belongs to the class-II pyridoxal-phosphate-dependent aminotransferase family. Histidinol-phosphate aminotransferase subfamily. As to quaternary structure, homodimer. Pyridoxal 5'-phosphate serves as cofactor.

The catalysed reaction is L-histidinol phosphate + 2-oxoglutarate = 3-(imidazol-4-yl)-2-oxopropyl phosphate + L-glutamate. Its pathway is amino-acid biosynthesis; L-histidine biosynthesis; L-histidine from 5-phospho-alpha-D-ribose 1-diphosphate: step 7/9. In Trichodesmium erythraeum (strain IMS101), this protein is Histidinol-phosphate aminotransferase.